The chain runs to 249 residues: tRNA pseudouridine synthase A (249 aa).

The Nucleophile role is filled by D53. Y111 contributes to the substrate binding site.

The protein belongs to the tRNA pseudouridine synthase TruA family. In terms of assembly, homodimer.

The catalysed reaction is uridine(38/39/40) in tRNA = pseudouridine(38/39/40) in tRNA. Formation of pseudouridine at positions 38, 39 and 40 in the anticodon stem and loop of transfer RNAs. The chain is tRNA pseudouridine synthase A from Streptococcus pneumoniae serotype 19F (strain G54).